The primary structure comprises 482 residues: UDP-N-acetylmuramoyl-L-alanyl-D-glutamate--2,6-diaminopimelate ligase (482 aa).

Ser-24 contributes to the UDP-N-acetyl-alpha-D-muramoyl-L-alanyl-D-glutamate binding site. 105-111 (GTNGKTT) lines the ATP pocket. UDP-N-acetyl-alpha-D-muramoyl-L-alanyl-D-glutamate contacts are provided by residues 147-148 (TT), Ser-174, Gln-180, and Arg-182. Lys-214 is modified (N6-carboxylysine). Meso-2,6-diaminopimelate contacts are provided by residues Arg-378, 402 to 405 (DNPR), Gly-453, and Glu-457. Positions 402 to 405 (DNPR) match the Meso-diaminopimelate recognition motif motif.

Belongs to the MurCDEF family. MurE subfamily. Requires Mg(2+) as cofactor. Carboxylation is probably crucial for Mg(2+) binding and, consequently, for the gamma-phosphate positioning of ATP.

It localises to the cytoplasm. It carries out the reaction UDP-N-acetyl-alpha-D-muramoyl-L-alanyl-D-glutamate + meso-2,6-diaminopimelate + ATP = UDP-N-acetyl-alpha-D-muramoyl-L-alanyl-gamma-D-glutamyl-meso-2,6-diaminopimelate + ADP + phosphate + H(+). It participates in cell wall biogenesis; peptidoglycan biosynthesis. Functionally, catalyzes the addition of meso-diaminopimelic acid to the nucleotide precursor UDP-N-acetylmuramoyl-L-alanyl-D-glutamate (UMAG) in the biosynthesis of bacterial cell-wall peptidoglycan. The polypeptide is UDP-N-acetylmuramoyl-L-alanyl-D-glutamate--2,6-diaminopimelate ligase (Lawsonia intracellularis (strain PHE/MN1-00)).